The following is a 271-amino-acid chain: 3-methyl-2-oxobutanoate hydroxymethyltransferase (271 aa).

2 residues coordinate Mg(2+): D50 and D89. 3-methyl-2-oxobutanoate is bound by residues 50 to 51 (DS), D89, and K118. E120 serves as a coordination point for Mg(2+). E187 (proton acceptor) is an active-site residue.

The protein belongs to the PanB family. Homodecamer; pentamer of dimers. The cofactor is Mg(2+).

It localises to the cytoplasm. The catalysed reaction is 3-methyl-2-oxobutanoate + (6R)-5,10-methylene-5,6,7,8-tetrahydrofolate + H2O = 2-dehydropantoate + (6S)-5,6,7,8-tetrahydrofolate. It functions in the pathway cofactor biosynthesis; (R)-pantothenate biosynthesis; (R)-pantoate from 3-methyl-2-oxobutanoate: step 1/2. Functionally, catalyzes the reversible reaction in which hydroxymethyl group from 5,10-methylenetetrahydrofolate is transferred onto alpha-ketoisovalerate to form ketopantoate. This is 3-methyl-2-oxobutanoate hydroxymethyltransferase from Campylobacter concisus (strain 13826).